The following is a 166-amino-acid chain: Alanine racemase (166 aa).

The active-site Proton acceptor; specific for L-alanine is Tyr62. Met110 contributes to the substrate binding site.

This sequence belongs to the alanine racemase family. Requires pyridoxal 5'-phosphate as cofactor.

The enzyme catalyses L-alanine = D-alanine. Its pathway is amino-acid biosynthesis; D-alanine biosynthesis; D-alanine from L-alanine: step 1/1. Functionally, catalyzes the interconversion of L-alanine and D-alanine. May also act on other amino acids. The protein is Alanine racemase (alr) of Piscirickettsia salmonis.